The following is a 741-amino-acid chain: HSP-interacting protein (741 aa).

TPR repeat units follow at residues 26–59 (SRELKEEGTRLFNRRDFEGAAFKYDKAVQLLPAG), 65–100 (AHLRASIAHCYMRMSPAEFHHAIHECNLALEAVPRY), and 102–134 (RALLRRAACFEALGRPDLAWGDIRTVLRWEPGN). The disordered stretch occupies residues 168-270 (ASAKGEERKK…GESKQQKHSA (103 aa)). Residues 171 to 184 (KGEERKKSRNKRFD) show a composition bias toward basic and acidic residues. Residues 201–218 (SASTEKQAGPRQTNGTGN) are compositionally biased toward polar residues. The segment covering 219–247 (HQDHTEDSESNGLEKLEQSTETGEKDMGK) has biased composition (basic and acidic residues). The span at 248 to 258 (KRGAHAAGKKP) shows a compositional bias: basic residues. Residues 285 to 364 (MKDVKLVFGE…VPIRFYVVEV (80 aa)) form the PB1 domain. 4 TPR repeats span residues 496–530 (EFILEKVNVSYDWACTEYAKAGAMFEEAVKTKSDF), 532–557 (EGLIALGQQKFEQAKLSWYYALACKI), 558–591 (NMETEVLELFNHAEDNMEKGMDMWERMETLRLKG), and 628–663 (SHINILWGTILYERSVVEFNLGLPSWEESLTVAMEK).

In terms of assembly, interacts (via C-terminus) with O1. Interacts (via C-terminus) with OP10 (via N-terminus).

In terms of biological role, acts as a co-chaperone for HSP90 and is required for proper folding of the myosin motor domain. The chain is HSP-interacting protein from Zea mays (Maize).